The primary structure comprises 552 residues: Membrane protein insertase YidC (552 aa).

A helical membrane pass occupies residues isoleucine 3–tryptophan 23. The interval proline 35–aspartate 59 is disordered. The segment covering threonine 42 to aspartate 59 has biased composition (low complexity). 3 consecutive transmembrane segments (helical) span residues tryptophan 364–alanine 384, phenylalanine 430–leucine 450, and methionine 504–leucine 524.

The protein belongs to the OXA1/ALB3/YidC family. Type 1 subfamily. Interacts with the Sec translocase complex via SecD. Specifically interacts with transmembrane segments of nascent integral membrane proteins during membrane integration.

The protein localises to the cell inner membrane. Functionally, required for the insertion and/or proper folding and/or complex formation of integral membrane proteins into the membrane. Involved in integration of membrane proteins that insert both dependently and independently of the Sec translocase complex, as well as at least some lipoproteins. Aids folding of multispanning membrane proteins. This is Membrane protein insertase YidC from Paraburkholderia phytofirmans (strain DSM 17436 / LMG 22146 / PsJN) (Burkholderia phytofirmans).